A 500-amino-acid chain; its full sequence is Histidine ammonia-lyase (500 aa).

Residues 141–143 (ASG) constitute a cross-link (5-imidazolinone (Ala-Gly)). 2,3-didehydroalanine (Ser) is present on Ser-142.

Belongs to the PAL/histidase family. In terms of processing, contains an active site 4-methylidene-imidazol-5-one (MIO), which is formed autocatalytically by cyclization and dehydration of residues Ala-Ser-Gly.

It is found in the cytoplasm. The catalysed reaction is L-histidine = trans-urocanate + NH4(+). The protein operates within amino-acid degradation; L-histidine degradation into L-glutamate; N-formimidoyl-L-glutamate from L-histidine: step 1/3. The polypeptide is Histidine ammonia-lyase (Shouchella clausii (strain KSM-K16) (Alkalihalobacillus clausii)).